A 272-amino-acid polypeptide reads, in one-letter code: uncharacterized protein (272 aa).

Glutamate 163 is a catalytic residue.

It belongs to the glycosyl hydrolase 25 family.

This is an uncharacterized protein from Escherichia coli O157:H7.